We begin with the raw amino-acid sequence, 517 residues long: MSPLALVSVSDKKHIVPFCMELVEQFNYRILSSGGTAKHLIEANIPVIKVADFTNSPEILGGRVKTLHPKIHGGILAKRTDEEHKRDIEANDLELIDLVVVNLYPFKKTVEQGSKWEDSIENIDIGGPSMIRSAAKNHKDVSVLVDPSQYQNFLEESKKGELKDSYKAQLALEAFQHTADYDTAISNWISKERGLQSSKYIESYPLINTLRYGENPHQKALWYGLSNIGWNSAEQLQGKDLSYNNLLDLESALSTVLEFGYAEKDELTTDTFASVILKHNNPCGASISNSASQAFLNALECDSVSAFGGIVAFNSNVDSETAINLKDIFLECVVAPSFDAEALEILKIKKNLRILKLSKDQLPKKKQTSTKSIMGGLLVQDTNDSEDKTESWMSVTKNNPSNQMNLDLNFAWKICKHVKSNAIVIAKDQKTIGIGAGQMNRVGAAKIALQAAGKLCSDAVLASDGFFPFADTVELANEYGIKAIIQPGGSLRDQESIDMCNSKGISMVITQKRHFLH.

Residues 1–145 (MSPLALVSVS…KNHKDVSVLV (145 aa)) form the MGS-like domain.

The protein belongs to the PurH family.

It carries out the reaction (6R)-10-formyltetrahydrofolate + 5-amino-1-(5-phospho-beta-D-ribosyl)imidazole-4-carboxamide = 5-formamido-1-(5-phospho-D-ribosyl)imidazole-4-carboxamide + (6S)-5,6,7,8-tetrahydrofolate. The catalysed reaction is IMP + H2O = 5-formamido-1-(5-phospho-D-ribosyl)imidazole-4-carboxamide. The protein operates within purine metabolism; IMP biosynthesis via de novo pathway; 5-formamido-1-(5-phospho-D-ribosyl)imidazole-4-carboxamide from 5-amino-1-(5-phospho-D-ribosyl)imidazole-4-carboxamide (10-formyl THF route): step 1/1. It functions in the pathway purine metabolism; IMP biosynthesis via de novo pathway; IMP from 5-formamido-1-(5-phospho-D-ribosyl)imidazole-4-carboxamide: step 1/1. This Prochlorococcus marinus (strain MIT 9312) protein is Bifunctional purine biosynthesis protein PurH.